The sequence spans 93 residues: Small ribosomal subunit protein uS19c (93 aa).

It belongs to the universal ribosomal protein uS19 family.

It localises to the plastid. The protein resides in the chloroplast. In terms of biological role, protein S19 forms a complex with S13 that binds strongly to the 16S ribosomal RNA. This chain is Small ribosomal subunit protein uS19c, found in Oryza nivara (Indian wild rice).